A 531-amino-acid polypeptide reads, in one-letter code: Nuclear RNA export factor 3 (531 aa).

2 disordered regions span residues 33-59 and 83-106; these read RSEP…HGAH and QDQT…GNMP. A compositionally biased stretch (polar residues) spans 41–50; it reads MHSSSHQQQD. Positions 83 to 102 are enriched in basic and acidic residues; sequence QDQTHVNMEREQKPPERRME. The 80-residue stretch at 113–192 folds into the RRM domain; the sequence is WFKITVPFGI…IFVNPAGIPH (80 aa). Residues 344–494 form the NTF2 domain; sequence LVLQFLQQYY…LCIVNDKLFV (151 aa).

It belongs to the NXF family. Interacts with NXT1, NXT2, E1B-AP5 and CRM1 nuclear export factor. As to expression, expressed at high level in testis and at low level in a small number of tissues.

The protein localises to the nucleus. Its subcellular location is the cytoplasm. May function as a tissue-specific nuclear mRNA export factor. The chain is Nuclear RNA export factor 3 (NXF3) from Homo sapiens (Human).